The following is a 348-amino-acid chain: tRNA N6-adenosine threonylcarbamoyltransferase (348 aa).

Residues H115 and H119 each coordinate Fe cation. Substrate is bound by residues 138–142 (LVSGG), D171, G184, and N276. D304 lines the Fe cation pocket.

It belongs to the KAE1 / TsaD family. The cofactor is Fe(2+).

It is found in the cytoplasm. The catalysed reaction is L-threonylcarbamoyladenylate + adenosine(37) in tRNA = N(6)-L-threonylcarbamoyladenosine(37) in tRNA + AMP + H(+). Its function is as follows. Required for the formation of a threonylcarbamoyl group on adenosine at position 37 (t(6)A37) in tRNAs that read codons beginning with adenine. Is involved in the transfer of the threonylcarbamoyl moiety of threonylcarbamoyl-AMP (TC-AMP) to the N6 group of A37, together with TsaE and TsaB. TsaD likely plays a direct catalytic role in this reaction. In Xylella fastidiosa (strain 9a5c), this protein is tRNA N6-adenosine threonylcarbamoyltransferase.